The following is a 259-amino-acid chain: 3'-5' ssDNA/RNA exonuclease TatD (259 aa).

A divalent metal cation-binding residues include Glu-92, His-128, and His-153.

The protein belongs to the metallo-dependent hydrolases superfamily. TatD-type hydrolase family. TatD subfamily. Monomer. The cofactor is Mg(2+).

It is found in the cytoplasm. Functionally, 3'-5' exonuclease that prefers single-stranded DNA and RNA. May play a role in the H(2)O(2)-induced DNA damage repair. The sequence is that of 3'-5' ssDNA/RNA exonuclease TatD from Erwinia amylovora (strain ATCC 49946 / CCPPB 0273 / Ea273 / 27-3).